A 1098-amino-acid chain; its full sequence is Probable arabinosyltransferase B (1098 aa).

12 helical membrane-spanning segments follow: residues 28 to 50 (WVAT…LPVV), 217 to 239 (LKLL…LWRL), 271 to 293 (ASWR…WHVI), 402 to 419 (LRPE…YVLI), 434 to 456 (AVVT…AALV), 472 to 494 (LVGT…TVVF), 541 to 558 (FGFL…FIML), 570 to 587 (PAWR…FLMF), 597 to 619 (GLFA…PSVL), 626 to 648 (MAFL…GWWY), 663 to 685 (IDGI…YAAW), and 698 to 720 (LIRA…VFVA).

It belongs to the emb family.

The protein localises to the cell membrane. In terms of biological role, arabinosyl transferase responsible for the polymerization of arabinose into the arabinan of arabinogalactan. The sequence is that of Probable arabinosyltransferase B (embB) from Mycobacterium tuberculosis (strain CDC 1551 / Oshkosh).